Reading from the N-terminus, the 302-residue chain is Cell division protein FtsQ (302 aa).

At 1–43 (MRPVDKKPVDRKIERETRYLRRDPAPSRWSYRYQRLMLTPAFR) the chain is on the cytoplasmic side. The chain crosses the membrane as a helical span at residues 44–64 (AGVRLGTPVIIIALAVAVVFG). At 65–302 (RADSRDWIMG…SMPGRSAGRG (238 aa)) the chain is on the periplasmic side. The POTRA domain maps to 89–156 (FMVGSFAITG…GVLQIVIEER (68 aa)).

This sequence belongs to the FtsQ/DivIB family. FtsQ subfamily.

It localises to the cell inner membrane. Its function is as follows. Essential cell division protein. The sequence is that of Cell division protein FtsQ from Ketogulonicigenium vulgare (strain Y25).